We begin with the raw amino-acid sequence, 799 residues long: Lon protease (799 aa).

The region spanning 7 to 200 (LPVLPLRDIV…KVFALMEGEI (194 aa)) is the Lon N-terminal domain. 352 to 359 (GPPGVGKT) contacts ATP. The region spanning 587 to 768 (VDQVGIVTGL…DEVLKHALTG (182 aa)) is the Lon proteolytic domain. Residues Ser674 and Lys717 contribute to the active site. The tract at residues 772 to 799 (PVEWNEAEEPITTSAKKDDGDSDAMLTH) is disordered.

The protein belongs to the peptidase S16 family. In terms of assembly, homohexamer. Organized in a ring with a central cavity.

The protein localises to the cytoplasm. The enzyme catalyses Hydrolysis of proteins in presence of ATP.. Its function is as follows. ATP-dependent serine protease that mediates the selective degradation of mutant and abnormal proteins as well as certain short-lived regulatory proteins. Required for cellular homeostasis and for survival from DNA damage and developmental changes induced by stress. Degrades polypeptides processively to yield small peptide fragments that are 5 to 10 amino acids long. Binds to DNA in a double-stranded, site-specific manner. CcrM is an important target of the Lon protease pathway in C.crescentus. The sequence is that of Lon protease from Caulobacter vibrioides (strain ATCC 19089 / CIP 103742 / CB 15) (Caulobacter crescentus).